We begin with the raw amino-acid sequence, 173 residues long: Crossover junction endodeoxyribonuclease RuvC (173 aa).

Catalysis depends on residues aspartate 8, glutamate 67, and aspartate 139. Mg(2+) contacts are provided by aspartate 8, glutamate 67, and aspartate 139.

Belongs to the RuvC family. In terms of assembly, homodimer which binds Holliday junction (HJ) DNA. The HJ becomes 2-fold symmetrical on binding to RuvC with unstacked arms; it has a different conformation from HJ DNA in complex with RuvA. In the full resolvosome a probable DNA-RuvA(4)-RuvB(12)-RuvC(2) complex forms which resolves the HJ. The cofactor is Mg(2+).

The protein resides in the cytoplasm. It carries out the reaction Endonucleolytic cleavage at a junction such as a reciprocal single-stranded crossover between two homologous DNA duplexes (Holliday junction).. The RuvA-RuvB-RuvC complex processes Holliday junction (HJ) DNA during genetic recombination and DNA repair. Endonuclease that resolves HJ intermediates. Cleaves cruciform DNA by making single-stranded nicks across the HJ at symmetrical positions within the homologous arms, yielding a 5'-phosphate and a 3'-hydroxyl group; requires a central core of homology in the junction. The consensus cleavage sequence is 5'-(A/T)TT(C/G)-3'. Cleavage occurs on the 3'-side of the TT dinucleotide at the point of strand exchange. HJ branch migration catalyzed by RuvA-RuvB allows RuvC to scan DNA until it finds its consensus sequence, where it cleaves and resolves the cruciform DNA. The chain is Crossover junction endodeoxyribonuclease RuvC from Klebsiella pneumoniae (strain 342).